The primary structure comprises 127 residues: Egg cell-secreted protein 1.4 (127 aa).

An N-terminal signal peptide occupies residues 1-25; it reads MASNTTFLFSTVTLLIILLNTTVSG.

Belongs to the plant egg cell-secreted peptide family. In terms of tissue distribution, restricted to female reproductive tissues, specifically accumulating in storage vesicles of the unfertilized egg cell.

It localises to the cytoplasmic vesicle. Its subcellular location is the secreted. Functionally, involved in the regulation of gamete interactions during the double fertilization and to prevent multiple-pollen tube attraction; mediates the redistribution of the gamete fusogen HAP2/GCS1 to the cell surface after secretion upon sperm arrival. This is Egg cell-secreted protein 1.4 (EC1.4) from Arabidopsis thaliana (Mouse-ear cress).